The following is a 357-amino-acid chain: Protein AAR2 homolog (357 aa).

The protein belongs to the AAR2 family.

The polypeptide is Protein AAR2 homolog (Caenorhabditis elegans).